A 1133-amino-acid chain; its full sequence is Envelopment polyprotein (1133 aa).

The N-terminal stretch at Met-1–Leu-17 is a signal peptide. At Lys-18–Ala-484 the chain is on the lumenal side. 11 disulfide bridges follow: Cys-27-Cys-149, Cys-61-Cys-155, Cys-107-Cys-126, Cys-131-Cys-136, Cys-173-Cys-183, Cys-208-Cys-245, Cys-232-Cys-349, Cys-374-Cys-433, Cys-378-Cys-387, Cys-403-Cys-422, and Cys-450-Cys-473. A glycan (N-linked (GlcNAc...) asparagine; by host) is linked at Asn-132. Asn-233 and Asn-345 each carry an N-linked (GlcNAc...) asparagine; by host glycan. N-linked (GlcNAc...) asparagine; by host glycosylation occurs at Asn-397. A helical transmembrane segment spans residues Leu-485–Leu-504. At Leu-505–Tyr-626 the chain is on the cytoplasmic side. Residues Leu-514–Lys-531 form a binding to the ribonucleoprotein region. 2 consecutive CCHC-type zinc fingers follow at residues Cys-543–Cys-563 and Cys-568–Cys-589. 3 binding to the ribonucleoprotein regions span residues Tyr-586 to Val-603, Gln-590 to Lys-601, and Gly-609 to Ser-623. The ITAM domain maps to Gly-609–Thr-632. The YxxL signature appears at Tyr-613 to Leu-616. The helical transmembrane segment at Ile-627 to Ala-647 threads the bilayer. The Lumenal segment spans residues Glu-648–Trp-1104. Disulfide bonds link Cys-733/Cys-768, Cys-737/Cys-775, Cys-749/Cys-883, Cys-763/Cys-894, Cys-778/Cys-902, Cys-804/Cys-813, Cys-821/Cys-830, and Cys-861/Cys-865. The segment at Tyr-755–Cys-775 is fusion loop. N-linked (GlcNAc...) asparagine; by host glycosylation is present at Asn-926. Intrachain disulfides connect Cys-968–Cys-998, Cys-991–Cys-1043, Cys-1008–Cys-1013, Cys-1044–Cys-1049, and Cys-1083–Cys-1087. The chain crosses the membrane as a helical span at residues Val-1105–Cys-1125. The binding to the ribonucleoprotein stretch occupies residues Leu-1120–Ser-1133. Over Pro-1126 to Ser-1133 the chain is Cytoplasmic.

The protein belongs to the hantavirus envelope glycoprotein family. Homodimer. Homotetramer; forms heterotetrameric Gn-Gc spikes in the pre-fusion conformation. Interacts (via C-terminus) with the nucleoprotein. Interacts with host TUFM; this interaction contributes to the virus-induced degradation of mitochondria by autophagy, which leads to degradation of host MAVS and inhibition of type I interferon (IFN) responses. Interacts with host MAP1LC3B; this interaction contributes to the virus-induced degradation of mitochondria by autophagy, which leads to degradation of host MAVS and inhibition of type I interferon (IFN) responses. As to quaternary structure, homodimer. Homotetramer; forms heterotetrameric Gn-Gc spikes in the pre-fusion conformation. Homotrimer; forms homotrimer in the post-fusion conformation at acidic pH. Interacts (via C-terminus) with the nucleoprotein. In terms of processing, envelope polyprotein precursor is quickly cleaved in vivo just after synthesis, presumably by host signal peptidase.

The protein localises to the virion membrane. Its subcellular location is the host cell surface. It is found in the host Golgi apparatus membrane. The protein resides in the host endoplasmic reticulum membrane. It localises to the host mitochondrion. Its function is as follows. Forms homotetramers with glycoprotein C at the surface of the virion. Attaches the virion to host cell receptors including integrin ITGAV/ITGB3. This attachment induces virion internalization predominantly through clathrin-dependent endocytosis. Mediates the assembly and budding of infectious virus particles through its interaction with the nucleocapsid protein and the viral genome. May dysregulate normal immune and endothelial cell responses through an ITAM motif. Translocates to mitochondria, binds to host TUFM and recruits MAP1LC3B. These interactions induce mitochondrial autophagy and therefore destruction of host MAVS leading to inhibition of type I interferon (IFN) responses. Concomitant breakdown of glycoprotein N is apparently prevented by the nucleoprotein that may inhibit Gn-stimulated autophagosome-lysosome fusion. Interacts with the viral genomic RNA. Functionally, forms homotetramers with glycoprotein N at the surface of the virion. Attaches the virion to host cell receptors including integrin ITGAV/ITGB3. This attachment induces virion internalization predominantly through clathrin-dependent endocytosis. Class II fusion protein that promotes fusion of viral membrane with host endosomal membrane after endocytosis of the virion. This Homo sapiens (Human) protein is Envelopment polyprotein (GP).